The following is a 59-amino-acid chain: Temporin-HN2 (59 aa).

The N-terminal stretch at 1–22 (MFTLKKSLLLLLFLGTINLSLS) is a signal peptide. Residues 16–44 (TINLSLSEQERDAKEERRDEMDVEVEKRN) adopt a coiled-coil conformation. Positions 23-41 (EQERDAKEERRDEMDVEVE) are excised as a propeptide. Leucine amide is present on leucine 57.

As to expression, expressed by the skin glands.

The protein resides in the secreted. In terms of biological role, has antimicrobial activity against some Gram-positive bacteria and fungi but has no activity against a range of Gram-negative bacteria except P.faecalis. Active against the Gram-positive bacteria S.aureus ATCC 25923 (MIC=4.8 uM), S.carnosus KHS (MIC=19 uM), B.licheniformis X39 (MIC=19 uM) and R.rhodochrous X15 (MIC=2.4 uM) but is inactive against E.faecium 091299 and E.faecalis 981. Has a less potent antimicrobial activity against the Gram-negative bacterium P.faecalis X29 (MIC=37.5 uM) and is inactive against E.coli, P.aeruginosa and S.typhi. Has antifungal activity against C.albicans ATCC 2002 (MIC=9.5 uM) and is also active against the slime mold 090223 (MIC=9.5 uM). Has extremely low hemolytic activity against human erythrocytes (LC(50)=300 uM). This is Temporin-HN2 from Odorrana hainanensis (Odor frog).